The chain runs to 452 residues: Sensor histidine kinase HprS (452 aa).

The Cytoplasmic portion of the chain corresponds to 1 to 9; it reads MKRLSITVR. The chain crosses the membrane as a helical span at residues 10–30; the sequence is LTLLFILLLSVAGAGIVWTLY. The Periplasmic portion of the chain corresponds to 31-158; that stretch reads NGLASELKWR…ARHNMLEQYK (128 aa). A helical membrane pass occupies residues 159–179; that stretch reads INSIIICIVAIVLCSVLSPLL. At 180-452 the chain is on the cytoplasmic side; that stretch reads IRTGLREIKK…VFRITLPQRN (273 aa). Residues 181–234 enclose the HAMP domain; that stretch reads RTGLREIKKLSGVTEALNYNDSREPVEVSALPRELKPLGQALNKMHHALVKDFE. In terms of domain architecture, Histidine kinase spans 242 to 452; the sequence is DLAHELRTPI…VFRITLPQRN (211 aa). His245 is modified (phosphohistidine; by autocatalysis).

Autophosphorylated.

It localises to the cell inner membrane. The enzyme catalyses ATP + protein L-histidine = ADP + protein N-phospho-L-histidine.. Member of a two-component regulatory system HprR/HprS involved in response to hydrogen peroxide. Senses H(2)O(2), maybe via the redox state of the membrane. Activates HprR by phosphorylation. Can also phosphorylate CusR. This is Sensor histidine kinase HprS from Escherichia coli (strain K12).